The sequence spans 400 residues: Phosphoglycerate kinase (400 aa).

Residues 21 to 23 (DLN), arginine 36, 59 to 62 (HLGR), arginine 114, and arginine 147 contribute to the substrate site. ATP-binding positions include lysine 202, glutamate 329, and 355-358 (GGDT).

The protein belongs to the phosphoglycerate kinase family. In terms of assembly, monomer.

It localises to the cytoplasm. The catalysed reaction is (2R)-3-phosphoglycerate + ATP = (2R)-3-phospho-glyceroyl phosphate + ADP. Its pathway is carbohydrate degradation; glycolysis; pyruvate from D-glyceraldehyde 3-phosphate: step 2/5. The sequence is that of Phosphoglycerate kinase from Psychrobacter cryohalolentis (strain ATCC BAA-1226 / DSM 17306 / VKM B-2378 / K5).